The sequence spans 473 residues: Isocitrate dehydrogenase [NADP] (473 aa).

Thr-104 serves as a coordination point for NADP(+). Positions 113, 115, 119, 129, and 153 each coordinate D-threo-isocitrate. Mg(2+) is bound at residue Asp-362. NADP(+) contacts are provided by residues 394–400, Asn-407, Tyr-446, and Arg-450; that span reads HGTAPKH.

This sequence belongs to the isocitrate and isopropylmalate dehydrogenases family. Homodimer. Requires Mg(2+) as cofactor. The cofactor is Mn(2+).

It carries out the reaction D-threo-isocitrate + NADP(+) = 2-oxoglutarate + CO2 + NADPH. Its activity is regulated as follows. Inhibited by either oxaloacetate or glyoxylate. Also inhibited by the adenine nucleotides AMP, ADP and ATP and by NADPH, which inhibits the activity by 28% when it is added to the assay mixture at 0.25 mM. In terms of biological role, catalyzes the oxidative decarboxylation of isocitrate to 2-oxoglutarate and carbon dioxide with the concomitant reduction of NADP(+). This is Isocitrate dehydrogenase [NADP] from Nostoc sp. (strain PCC 7120 / SAG 25.82 / UTEX 2576).